We begin with the raw amino-acid sequence, 398 residues long: Cap-specific mRNA (nucleoside-2'-O-)-methyltransferase 1 (398 aa).

The RrmJ-type SAM-dependent 2'-O-MTase domain occupies 85–298; that stretch reads QFSNRAGHKL…ERYLVCVDFL (214 aa). Residues Gly-132 and Asp-211 each contribute to the S-adenosyl-L-methionine site. The active-site Proton acceptor is Lys-252. The interval 371-398 is disordered; the sequence is LKAKETTTRTSAESDDSPLSSRESCKDG.

It catalyses the reaction a 5'-end (N(7)-methyl 5'-triphosphoguanosine)-ribonucleoside in mRNA + S-adenosyl-L-methionine = a 5'-end (N(7)-methyl 5'-triphosphoguanosine)-(2'-O-methyl-ribonucleoside) in mRNA + S-adenosyl-L-homocysteine + H(+). Its function is as follows. S-adenosyl-L-methionine-dependent methyltransferase that mediates RNA cap1 2'-O-ribose methylation to the 5'-cap structure of RNAs. Methylates the ribose of the first nucleotide of a m(7)GpppG-capped mRNA to produce m(7)GpppNmp (cap1). The sequence is that of Cap-specific mRNA (nucleoside-2'-O-)-methyltransferase 1 from Leishmania braziliensis.